We begin with the raw amino-acid sequence, 305 residues long: Nod factor export ATP-binding protein I (305 aa).

An ABC transporter domain is found at 8–237; that stretch reads IDLVGVRKSF…HIGCNVIEIY (230 aa). ATP is bound at residue 40-47; it reads GPNGAGKS.

It belongs to the ABC transporter superfamily. Lipooligosaccharide exporter (TC 3.A.1.102) family. The complex is composed of two ATP-binding proteins (NodI) and two transmembrane proteins (NodJ).

The protein resides in the cell inner membrane. In terms of biological role, part of the ABC transporter complex NodIJ involved in the export of the nodulation factors (Nod factors), the bacterial signal molecules that induce symbiosis and subsequent nodulation induction. Nod factors are LCO (lipo-chitin oligosaccharide), a modified beta-1,4-linked N-acetylglucosamine oligosaccharide. This subunit is responsible for energy coupling to the transport system. The polypeptide is Nod factor export ATP-binding protein I (Bradyrhizobium sp. (strain SNU001)).